An 804-amino-acid chain; its full sequence is Ion-translocating oxidoreductase complex subunit C (804 aa).

4Fe-4S ferredoxin-type domains lie at 366–397 (SEMGQNEAEQGCIRCSACADACPAALLPQQLY) and 407–436 (KARAHNIADCIECGACAYVCPSNIPLVQYY). Residues cysteine 377, cysteine 380, cysteine 383, cysteine 387, cysteine 416, cysteine 419, cysteine 422, and cysteine 426 each contribute to the [4Fe-4S] cluster site. Disordered stretches follow at residues 466–532 (RLER…EVRV) and 567–804 (KAAQ…MQED). 7 stretches are compositionally biased toward low complexity: residues 484-495 (SVASSDAGAIAA), 567-582 (KAAQAAEASPTEAPQQ), 592-619 (AAVAAAVARTKAKKAAQAAEASPTEAPQ), 629-660 (KAAVAAAVARAKAKKAAQAAEASATEAPQQSA), 668-693 (AAVAAAVARAKAKKAAQAAEASATEA), 706-731 (AAVAAAVARAKAKKAAQAAEASATEA), and 744-769 (AAVAAAVARAKAKKAAQAAEASATEA).

The protein belongs to the 4Fe4S bacterial-type ferredoxin family. RnfC subfamily. The complex is composed of six subunits: RnfA, RnfB, RnfC, RnfD, RnfE and RnfG. [4Fe-4S] cluster is required as a cofactor.

It is found in the cell inner membrane. Its function is as follows. Part of a membrane-bound complex that couples electron transfer with translocation of ions across the membrane. The sequence is that of Ion-translocating oxidoreductase complex subunit C from Erwinia tasmaniensis (strain DSM 17950 / CFBP 7177 / CIP 109463 / NCPPB 4357 / Et1/99).